The following is a 298-amino-acid chain: Cation-efflux pump FieF (298 aa).

Residues 24–44 (LLIKIFAWWYTGSVSILAALV) traverse the membrane as a helical segment. Residues aspartate 45 and aspartate 49 each coordinate Zn(2+). 2 helical membrane passes run 80-100 (SLAA…LTSI) and 112-132 (PGVG…LVTF). Zn(2+)-binding residues include histidine 151 and aspartate 155. Transmembrane regions (helical) follow at residues 154–174 (SDVM…YGWH) and 176–196 (ADAL…LRMG).

Belongs to the cation diffusion facilitator (CDF) transporter (TC 2.A.4) family. FieF subfamily. Homodimer.

The protein localises to the cell inner membrane. The catalysed reaction is Zn(2+)(in) + H(+)(out) = Zn(2+)(out) + H(+)(in). It carries out the reaction Cd(2+)(in) + H(+)(out) = Cd(2+)(out) + H(+)(in). The enzyme catalyses Fe(2+)(in) + H(+)(out) = Fe(2+)(out) + H(+)(in). Its function is as follows. Divalent metal cation transporter which exports Zn(2+), Cd(2+) and possibly Fe(2+). May be involved in zinc and iron detoxification by efflux. This Salmonella typhi protein is Cation-efflux pump FieF.